A 313-amino-acid polypeptide reads, in one-letter code: 2,3-dihydroxyphenylpropionate/2,3-dihydroxicinnamic acid 1,2-dioxygenase (313 aa).

The active-site Proton donor is histidine 115. Catalysis depends on histidine 179, which acts as the Proton acceptor.

The protein belongs to the LigB/MhpB extradiol dioxygenase family. Homotetramer. The cofactor is Fe(2+).

The enzyme catalyses 3-(2,3-dihydroxyphenyl)propanoate + O2 = (2Z,4E)-2-hydroxy-6-oxonona-2,4-dienedioate + H(+). The catalysed reaction is (2E)-3-(2,3-dihydroxyphenyl)prop-2-enoate + O2 = (2Z,4E,7E)-2-hydroxy-6-oxonona-2,4,7-trienedioate + H(+). The protein operates within aromatic compound metabolism; 3-phenylpropanoate degradation. Catalyzes the non-heme iron(II)-dependent oxidative cleavage of 2,3-dihydroxyphenylpropionic acid and 2,3-dihydroxicinnamic acid into 2-hydroxy-6-ketononadienedioate and 2-hydroxy-6-ketononatrienedioate, respectively. This Mycolicibacterium smegmatis (strain ATCC 700084 / mc(2)155) (Mycobacterium smegmatis) protein is 2,3-dihydroxyphenylpropionate/2,3-dihydroxicinnamic acid 1,2-dioxygenase.